The chain runs to 358 residues: 4-hydroxy-3-methylbut-2-en-1-yl diphosphate synthase (flavodoxin) (358 aa).

4 residues coordinate [4Fe-4S] cluster: Cys-270, Cys-273, Cys-305, and Glu-312.

This sequence belongs to the IspG family. Requires [4Fe-4S] cluster as cofactor.

It carries out the reaction (2E)-4-hydroxy-3-methylbut-2-enyl diphosphate + oxidized [flavodoxin] + H2O + 2 H(+) = 2-C-methyl-D-erythritol 2,4-cyclic diphosphate + reduced [flavodoxin]. It functions in the pathway isoprenoid biosynthesis; isopentenyl diphosphate biosynthesis via DXP pathway; isopentenyl diphosphate from 1-deoxy-D-xylulose 5-phosphate: step 5/6. Functionally, converts 2C-methyl-D-erythritol 2,4-cyclodiphosphate (ME-2,4cPP) into 1-hydroxy-2-methyl-2-(E)-butenyl 4-diphosphate. This chain is 4-hydroxy-3-methylbut-2-en-1-yl diphosphate synthase (flavodoxin), found in Ruthia magnifica subsp. Calyptogena magnifica.